A 519-amino-acid chain; its full sequence is LysM domain-containing protein ARB_03442 (519 aa).

Residues 1 to 19 (MGQLKQLAGILALASPAIA) form the signal peptide. N47 carries N-linked (GlcNAc...) asparagine glycosylation. The 47-residue stretch at 312–358 (KYYNVVAGDTCASISSEFEVTMDELLTYNPELHPNCENLWANFAICV) folds into the LysM domain. A lysM domain region spans residues 314 to 358 (YNVVAGDTCASISSEFEVTMDELLTYNPELHPNCENLWANFAICV). The segment covering 407-416 (PDAPDAQGQT) has biased composition (low complexity). Positions 407–458 (PDAPDAQGQTVHDDEPPEEPHIEEPPKDIPAGDDDDRKKAKLPLPSGKYPLP) are disordered. Residues 417 to 433 (VHDDEPPEEPHIEEPPK) show a composition bias toward basic and acidic residues. N460 carries an N-linked (GlcNAc...) asparagine glycan. The Chitin-binding type-1 domain occupies 467–510 (DGSCNEYISCVGSPFGVCCSTSGWCGYGKPWCGVGNCVSGYCDT). Intrachain disulfides connect C470-C485, C476-C491, C484-C498, and C503-C508.

It is found in the secreted. In terms of biological role, might have a role in sequestration of chitin oligosaccharides (breakdown products of fungal cell walls that are released during invasion and act as triggers of host immunity) to dampen host defense. This Arthroderma benhamiae (strain ATCC MYA-4681 / CBS 112371) (Trichophyton mentagrophytes) protein is LysM domain-containing protein ARB_03442.